The sequence spans 293 residues: Deubiquitinase OTUD6B (293 aa).

The residue at position 1 (Met1) is an N-acetylmethionine. Residues 147-284 enclose the OTU domain; it reads LEIKQIPSDG…GEHYNSVTRL (138 aa). Residues 152 to 158 form a cys-loop region; that stretch reads IPSDGHC. The active site involves Asp155. Cys158 serves as the catalytic Nucleophile. Positions 219–229 are variable-loop; that stretch reads IVNTAAWGGQL. The tract at residues 267-277 is his-loop; sequence YMRHAYGLGEH. The active site involves His277.

As to quaternary structure, interacts with the eukaryotic translation initiation factor 4F complex.

It catalyses the reaction Thiol-dependent hydrolysis of ester, thioester, amide, peptide and isopeptide bonds formed by the C-terminal Gly of ubiquitin (a 76-residue protein attached to proteins as an intracellular targeting signal).. Functionally, deubiquitinating enzyme that may play a role in the ubiquitin-dependent regulation of protein synthesis, downstream of mTORC1. May associate with the protein synthesis initiation complex and modify its ubiquitination to repress translation. May also repress DNA synthesis and modify different cellular targets thereby regulating cell growth and proliferation. May also play a role in proteasome assembly and function. In terms of biological role, stimulates protein synthesis. Influences the expression of CCND1/cyclin D1 by promoting its translation and regulates MYC/c-Myc protein stability. The sequence is that of Deubiquitinase OTUD6B from Homo sapiens (Human).